A 393-amino-acid chain; its full sequence is Sulfite oxidase (393 aa).

The segment at 1–27 (MPGIRGPSEYSQEPPRHPSLKVNAKEP) is disordered. The tract at residues 10 to 242 (YSQEPPRHPS…QGFFMQKDYK (233 aa)) is moco domain. Mo-molybdopterin is bound by residues 49 to 53 (YKRNH), Cys-98, 159 to 161 (SVD), His-202, Arg-207, and 218 to 220 (SVK). A homodimerization region spans residues 243 to 393 (MFPPSVNWDN…VLLRLGHSNL (151 aa)). A Microbody targeting signal motif is present at residues 391-393 (SNL).

Predominantly monomer; also homodimer. Mo-molybdopterin serves as cofactor.

Its subcellular location is the peroxisome. The catalysed reaction is sulfite + O2 + H2O = sulfate + H2O2. It functions in the pathway energy metabolism; sulfur metabolism. Its function is as follows. Probably involved in sulfite oxidative detoxification. The protein is Sulfite oxidase (SOX) of Arabidopsis thaliana (Mouse-ear cress).